The following is a 37-amino-acid chain: GCIPYGKTCEFWSGPWCCAGKCKLNVWSMTLSCTRNF.

3 disulfide bridges follow: Cys-2–Cys-18, Cys-9–Cys-22, and Cys-17–Cys-33. Phe-37 carries the post-translational modification Phenylalanine amide.

Belongs to the neurotoxin 01 (U2-agtx) family. Contains 3 disulfide bonds. As to expression, expressed by the venom gland.

It is found in the secreted. In terms of biological role, blocks the Nav1.2/SCN2A, Nav1.4/SCN4A, and Nav1.6/SCN8A sodium channels. Reduces the peak amplitude of the sodium current and negatively shifts the steady-state inactivation process. Does not shift the threshold potential of activation or the voltage corresponding to maximal current. Does not change the reversal potential of the sodium current. May act on site 1 of the receptor. The protein is Mu-thomitoxin-Hme1a of Heriaeus mellotteei (Crab spider).